The sequence spans 120 residues: Large ribosomal subunit protein uL18 (120 aa).

Positions Met-1–Gly-22 are disordered. Over residues Ser-8–Gly-18 the composition is skewed to basic residues.

It belongs to the universal ribosomal protein uL18 family. Part of the 50S ribosomal subunit; part of the 5S rRNA/L5/L18/L25 subcomplex. Contacts the 5S and 23S rRNAs.

This is one of the proteins that bind and probably mediate the attachment of the 5S RNA into the large ribosomal subunit, where it forms part of the central protuberance. This Nostoc punctiforme (strain ATCC 29133 / PCC 73102) protein is Large ribosomal subunit protein uL18.